We begin with the raw amino-acid sequence, 723 residues long: LIM domain-binding protein 3 (723 aa).

A PDZ domain is found at 1 to 84 (MSYSVTLTGP…NLSLTLQKSK (84 aa)). Phosphoserine is present on residues serine 44, serine 98, and aspartate 112. 2 disordered regions span residues 89 to 134 (ISTT…GALE) and 164 to 193 (SPVA…RQYN). Threonine 119 carries the post-translational modification Phosphothreonine. Phosphoserine is present on residues serine 121 and serine 123. A Phosphoserine modification is found at serine 214. Arginine 216 is modified (omega-N-methylarginine). Phosphoserine occurs at positions 220, 251, and 288. Disordered stretches follow at residues 280–423 (GTEY…YSPT) and 436–525 (SPAP…PQVT). Alanine 291 is modified (omega-N-methylarginine). A compositionally biased stretch (low complexity) spans 309–376 (ATSPLLPASA…AAAASPAPSA (68 aa)). Isoleucine 327 bears the Phosphoserine mark. Omega-N-methylarginine is present on serine 330. The span at 436 to 466 (SPAPTYTPSPAPTYSPSPAPAYTPSPAPNYT) shows a compositional bias: pro residues. Over residues 490 to 509 (DSFSQKFAPGKSTTTVSKQT) the composition is skewed to polar residues. Residues arginine 512 and arginine 529 each carry the omega-N-methylarginine modification. LIM zinc-binding domains are found at residues 545–603 (PLCG…QFFA), 604–663 (PICA…LFST), and 664–723 (KCHG…AINV).

In terms of assembly, interacts via its LIM domains with various PKC isoforms. Interacts via its PDZ domain with the ACTN2 C-terminal region. Interacts with MYOZ1, MYOZ2 and MYOZ3. As to expression, expressed primarily in adult heart and skeletal muscle, and detected at lower levels in lung. Isoforms are expressed in a tissue-specific manner. Isoform 1, isoform 3 and isoform 5 are expressed in heart, whereas isoform 2, isoform 4 and isoform 6 are expressed in skeletal muscle.

The protein resides in the cytoplasm. It localises to the perinuclear region. Its subcellular location is the cell projection. It is found in the pseudopodium. The protein localises to the cytoskeleton. The protein resides in the myofibril. It localises to the sarcomere. Its subcellular location is the z line. May function as an adapter in striated muscle to couple protein kinase C-mediated signaling via its LIM domains to the cytoskeleton. The protein is LIM domain-binding protein 3 of Mus musculus (Mouse).